The sequence spans 134 residues: Profilin-5 (134 aa).

Belongs to the profilin family. As to quaternary structure, occurs in many kinds of cells as a complex with monomeric actin in a 1:1 ratio. In terms of tissue distribution, specifically expressed in mature pollen grains. Expressed in germinating pollen grains. Expressed in growing pollen tubes (at protein level).

The protein resides in the cytoplasm. It is found in the cytoskeleton. Its function is as follows. Binds to actin monomers and regulates the organization of the actin cytoskeleton. At high concentrations, profilin prevents the polymerization of actin, whereas it enhances it at low concentrations. At low concentrations, associates with the poly-proline motif of formins to enhance actin filament elongation rate. Acts redundantly with PRF4 to regulate apical actin polymerization at the tip of pollen tube and control polarized pollen tube growth. Functions probably by favoring formin-mediated actin polymerization at pollen tube tips. The chain is Profilin-5 from Arabidopsis thaliana (Mouse-ear cress).